An 800-amino-acid chain; its full sequence is Protein gfi-3 (800 aa).

A coiled-coil region spans residues 346-366 (ESLQQAQLRNDEICHQMANIE). TPR repeat units follow at residues 526–559 (AIGA…YPEE) and 637–670 (IRIH…AENT).

In terms of assembly, the APC/C complex is probably composed of at least 12 subunits: apc-2, apc-10, apc-11, cdc-26, emb-1, emb-27, emb-30, mat-1, mat-2, mat-3, such-1 and gfi-3. In terms of tissue distribution, expressed in gut cells and mature sperm stored in the spermatheca.

Its pathway is protein modification; protein ubiquitination. Its function is as follows. Probable component of the anaphase promoting complex/cyclosome (APC/C), a cell cycle-regulated E3 ubiquitin ligase that controls progression through mitosis and the G1 phase of the cell cycle. The APC/C complex acts by mediating ubiquitination and subsequent degradation of target proteins. Required for the metaphase to anaphase transition in meiosis. The chain is Protein gfi-3 from Caenorhabditis elegans.